Consider the following 307-residue polypeptide: MTDLRGTLTENRPLADLTWLRVGGPADLFFQPADADDLAAFLRADLARPVFVMGVGSNLIVRDGGLRAAVIRLGRGFNGIRIDGTRVRAGAAALDAHVARKAAAAGVDLTFLRTIPGTIGGAVAMNAGCYGTYMADVFVEATALTRAGEAITLTREDLNFRYRQSDLPPGTVITEVVMEGPPGAPEALEARMADQLAKREATQPTKDRTAGSTFRNPAGFSSTGRADDTHEAKAWAVIDAAGMRGAMRGAAQMSPKHPNFLVNTGGATAAELESLGEEVRKKVFQATGHSLHWEVIRIGQPGRTPPA.

The region spanning 21–183 is the FAD-binding PCMH-type domain; sequence RVGGPADLFF…TEVVMEGPPG (163 aa). Arg163 is a catalytic residue. Residues 200 to 209 show a composition bias toward basic and acidic residues; the sequence is EATQPTKDRT. The interval 200–227 is disordered; that stretch reads EATQPTKDRTAGSTFRNPAGFSSTGRAD. A compositionally biased stretch (polar residues) spans 210–224; sequence AGSTFRNPAGFSSTG. Residue Ser212 is the Proton donor of the active site. Glu294 is a catalytic residue.

The protein belongs to the MurB family. FAD serves as cofactor.

The protein resides in the cytoplasm. It catalyses the reaction UDP-N-acetyl-alpha-D-muramate + NADP(+) = UDP-N-acetyl-3-O-(1-carboxyvinyl)-alpha-D-glucosamine + NADPH + H(+). Its pathway is cell wall biogenesis; peptidoglycan biosynthesis. In terms of biological role, cell wall formation. This chain is UDP-N-acetylenolpyruvoylglucosamine reductase, found in Dinoroseobacter shibae (strain DSM 16493 / NCIMB 14021 / DFL 12).